The chain runs to 865 residues: Alanine--tRNA ligase (865 aa).

4 residues coordinate Zn(2+): histidine 554, histidine 558, cysteine 656, and histidine 660.

Belongs to the class-II aminoacyl-tRNA synthetase family. Zn(2+) is required as a cofactor.

The protein resides in the cytoplasm. The enzyme catalyses tRNA(Ala) + L-alanine + ATP = L-alanyl-tRNA(Ala) + AMP + diphosphate. Functionally, catalyzes the attachment of alanine to tRNA(Ala) in a two-step reaction: alanine is first activated by ATP to form Ala-AMP and then transferred to the acceptor end of tRNA(Ala). Also edits incorrectly charged Ser-tRNA(Ala) and Gly-tRNA(Ala) via its editing domain. The polypeptide is Alanine--tRNA ligase (Francisella tularensis subsp. novicida (strain U112)).